Reading from the N-terminus, the 179-residue chain is Protein GrpE (179 aa).

The tract at residues 1–23 (MSEEIKEQNVQDAQNENLAPDSV) is disordered.

Belongs to the GrpE family. As to quaternary structure, homodimer.

Its subcellular location is the cytoplasm. In terms of biological role, participates actively in the response to hyperosmotic and heat shock by preventing the aggregation of stress-denatured proteins, in association with DnaK and GrpE. It is the nucleotide exchange factor for DnaK and may function as a thermosensor. Unfolded proteins bind initially to DnaJ; upon interaction with the DnaJ-bound protein, DnaK hydrolyzes its bound ATP, resulting in the formation of a stable complex. GrpE releases ADP from DnaK; ATP binding to DnaK triggers the release of the substrate protein, thus completing the reaction cycle. Several rounds of ATP-dependent interactions between DnaJ, DnaK and GrpE are required for fully efficient folding. In Campylobacter curvus (strain 525.92), this protein is Protein GrpE.